A 314-amino-acid chain; its full sequence is UDP-N-acetylenolpyruvoylglucosamine reductase (314 aa).

The region spanning 27 to 192 is the FAD-binding PCMH-type domain; that stretch reads KIGGKARYIV…LRAVFCLKFA (166 aa). Arg-171 is an active-site residue. Catalysis depends on Ser-223, which acts as the Proton donor. Glu-293 is an active-site residue.

It belongs to the MurB family. FAD serves as cofactor.

Its subcellular location is the cytoplasm. It carries out the reaction UDP-N-acetyl-alpha-D-muramate + NADP(+) = UDP-N-acetyl-3-O-(1-carboxyvinyl)-alpha-D-glucosamine + NADPH + H(+). Its pathway is cell wall biogenesis; peptidoglycan biosynthesis. Cell wall formation. In Caldicellulosiruptor bescii (strain ATCC BAA-1888 / DSM 6725 / KCTC 15123 / Z-1320) (Anaerocellum thermophilum), this protein is UDP-N-acetylenolpyruvoylglucosamine reductase.